We begin with the raw amino-acid sequence, 725 residues long: MESGRGSSTPPGPIAALGMPDTGPGSSSLGKLQALPVGPRAHCGDPVSLAAAGDGSPDIGPTGELSGSLKIPNRDSGIDSPSSSVAGENFPCEEGLEAGPSPTVLGAHAEMALDSQVPKVTPQEEADSDVGEEPDSENTPQKADKDAGLAQHSGPQKLLHIAQELLHTEETYVKRLHLLDQVFCTRLTDAGIPPEVIMGIFSNISSIHRFHGQFLLPELKTRITEEWDTNPRLGDILQKLAPFLKMYGEYVKNFDRAVGLVSTWTQRSPLFKDVVHSIQKQEVCGNLTLQHHMLEPVQRVPRYELLLKDYLKRLPQDAPDRKDAERSLELISTAANHSNAAIRKVEKMHKLLEVYEQLGGEEDIVNPANELIKEGQIQKLSAKNGTPQDRHLFLFNSMILYCVPKLRLMGQKFSVREKMDISGLQVQDIVKPNTAHTFIITGRKRSLELQTRTEEEKKEWIQIIQATIEKHKQNSETFKAFGGAFSQDEDPSLSPDMPITSTSPVEPVVTTEGSSGAAGLEPRKLSSKTRRDKEKQSCKSCGETFNSITKRRHHCKLCGAVICGKCSEFKAENSRQSRVCRDCFLTQPVAPESTEKTPTADPQPSLLCGPLRLSESGETWSEVWAAIPMSDPQVLHLQGGSQDGRLPRTIPLPSCKLSVPDPEERLDSGHVWKLQWAKQSWYLSASSAELQQQWLETLSTAAHGDTAQDSPGALQLQVPMGAAAP.

Positions 1-151 are disordered; it reads MESGRGSSTP…KADKDAGLAQ (151 aa). Positions 124-136 are enriched in acidic residues; the sequence is EEADSDVGEEPDS. At serine 128 the chain carries Phosphoserine. A DH domain is found at 157-341; sequence KLLHIAQELL…STAANHSNAA (185 aa). The region spanning 370-469 is the PH 1 domain; that stretch reads ELIKEGQIQK…WIQIIQATIE (100 aa). The disordered stretch occupies residues 487–532; it reads QDEDPSLSPDMPITSTSPVEPVVTTEGSSGAAGLEPRKLSSKTRRD. Positions 500-512 are enriched in low complexity; sequence TSTSPVEPVVTTE. The span at 521–532 shows a compositional bias: basic and acidic residues; sequence EPRKLSSKTRRD. The segment at 532 to 588 adopts an FYVE-type zinc-finger fold; that stretch reads DKEKQSCKSCGETFNSITKRRHHCKLCGAVICGKCSEFKAENSRQSRVCRDCFLTQP. 8 residues coordinate Zn(2+): cysteine 538, cysteine 541, cysteine 555, cysteine 558, cysteine 563, cysteine 566, cysteine 580, and cysteine 583. The 100-residue stretch at 604-703 folds into the PH 2 domain; it reads PSLLCGPLRL…WLETLSTAAH (100 aa). The interval 703–725 is disordered; it reads HGDTAQDSPGALQLQVPMGAAAP.

The protein resides in the cytoplasm. The protein localises to the cytoskeleton. In terms of biological role, promotes the formation of filopodia. May activate CDC42, a member of the Ras-like family of Rho- and Rac proteins, by exchanging bound GDP for free GTP. Plays a role in regulating the actin cytoskeleton and cell shape. The polypeptide is FYVE, RhoGEF and PH domain-containing protein 3 (FGD3) (Homo sapiens (Human)).